The sequence spans 1001 residues: MEGQSRSGSAKSGTRTGLGPLPGTHGALQTGTPSKKVNSSFQLPAKNTGPTPSEPRLALAPVGPRAAVSPPSERPRLALSSPRPILAPLSTAGEQKRPPPHRSSKPAPTSVGQLVVSAAAGPKPPPVASVSILAPKSLGQLVISASAMPRPTPAPLGPILSPTSRDQKQLSPTSVGPKPALATSGLSLALASQEQPPQSPSSPSPVPSPVLSPSQESHLAPATVTSTPASERQLPARQKDTAVRRPIPPADGCLHTPVQAAGLATSPPRAQTSSDPRLSPSFRARPEAPRHSPEDPVLPPPPQTLPLDVSSGLPESGTRSPGLLSPTFRPGIPSNQTVPPPLPKPPRSPSRSPSRSPNRSPCVPPAPEVALPRPVTQGAGPGKCPSPNLQTQESPVATATSPTSSWSAQPTCKSDPGFRITVVTWNVGTAMPPDDVTSLLHLGGGHDSDGADMIAIGLQEVNSMINKRLKDALFTDQWSELFMDALGPFNFVLVSTVRMQGVILLLFAKYYHLPFLRDVQTDCTRTGLGGYWGNKGGVSVRLAAFGHMLCFLNCHLPAHMDKAEQRKDNFQTILSLQQFQGPGAHGILDHDLVFWFGDLNFRIESYDLHFVKFAIDSNQLHQLWEKDQLNMAKNTWPILKGFQEGPLNFAPTFKFDVGTNKYDTSAKKRKPAWTDRILWKVKAPSGGPSPSGRESHRLQVTQHSYRSHMEYTVSDHKPVAARFLLQFAFRDDVPLVRLEVADEWARPEQAVVRYRVETVFARSSWDWIGLYRVGFRHCKDYVAYVWAKHEEVDGNIYQVTFSEESLPKGHGDFILGYYSHHHSILIGVTEPFQISLPTSESASSSTDSSGTSSEGEDDSTLELLAPKSRSPSPGKSKRHRSRSPGLARFPSLALRPSSRERRGGSRSPSPQSRQLPRVAPDRGHSSGSRGSSEEGPSGPPGPWAFPPAVPRSLGLLPALRLETVDPGGGGSWGPDQEAPDPNSLSPSPQGRLGLEDGGLGP.

Over residues 1–12 (MEGQSRSGSAKS) the composition is skewed to polar residues. 2 disordered regions span residues 1-130 (MEGQ…VASV) and 144-412 (SASA…QPTC). Positions 6–11 (RSGSAK) match the RSXSXX motif 1 motif. Over residues 13–28 (GTRTGLGPLPGTHGAL) the composition is skewed to low complexity. A compositionally biased stretch (polar residues) spans 29-42 (QTGTPSKKVNSSFQ). At Arg56 the chain carries Asymmetric dimethylarginine; alternate. Arg56 carries the omega-N-methylarginine; alternate modification. An Omega-N-methylarginine modification is found at Arg65. Arg76 is modified (asymmetric dimethylarginine). Arg83 is subject to Asymmetric dimethylarginine; alternate. Omega-N-methylarginine; alternate is present on Arg83. A compositionally biased stretch (polar residues) spans 161–174 (SPTSRDQKQLSPTS). Residue Ser171 is modified to Phosphoserine. Residues 180–196 (ALATSGLSLALASQEQP) show a composition bias toward low complexity. Residues 197 to 210 (PQSPSSPSPVPSPV) show a composition bias toward pro residues. The span at 284 to 294 (ARPEAPRHSPE) shows a compositional bias: basic and acidic residues. A phosphoserine mark is found at Ser292 and Ser325. Over residues 338–348 (VPPPLPKPPRS) the composition is skewed to pro residues. Residues 346–351 (PRSPSR) carry the SH3-binding motif. 2 stretches are compositionally biased toward low complexity: residues 349 to 361 (PSRS…NRSP) and 394 to 411 (SPVA…AQPT). Positions 351 to 356 (RSPSRS) match the RSXSXX motif 2 motif. Residues 420–723 (ITVVTWNVGT…SDHKPVAARF (304 aa)) are catalytic. Positions 724-835 (LLQFAFRDDV…IGVTEPFQIS (112 aa)) are required for ruffle localization. The segment at 837-1001 (PTSESASSST…LGLEDGGLGP (165 aa)) is disordered. Residues 838 to 853 (TSESASSSTDSSGTSS) show a composition bias toward low complexity. Short sequence motifs (RSXSXX motif) lie at residues 869–874 (RSPSPG) and 880–885 (RSRSPG). A Phosphoserine modification is found at Ser898. Composition is skewed to low complexity over residues 905–917 (SRSP…QLPR) and 925–936 (SSGSRGSSEEGP). Positions 906-911 (RSPSPQ) match the RSXSXX motif 5 motif. The span at 937–949 (SGPPGPWAFPPAV) shows a compositional bias: pro residues. The residue at position 985 (Ser985) is a Phosphoserine.

Belongs to the inositol 1,4,5-trisphosphate 5-phosphatase type II family. In terms of processing, phosphorylated on Ser/Thr residues. As to expression, expressed in heart, brain, kidney, stomach, small intestine and lung. Not expressed in spleen, thymus, skeletal muscle, testis and skin.

It localises to the cytoplasm. It catalyses the reaction 1D-myo-inositol 1,4,5-trisphosphate + H2O = 1D-myo-inositol 1,4-bisphosphate + phosphate. The enzyme catalyses 1D-myo-inositol 1,3,4,5-tetrakisphosphate + H2O = 1D-myo-inositol 1,3,4-trisphosphate + phosphate. It carries out the reaction a 1,2-diacyl-sn-glycero-3-phospho-(1D-myo-inositol-4,5-bisphosphate) + H2O = a 1,2-diacyl-sn-glycero-3-phospho-(1D-myo-inositol 4-phosphate) + phosphate. Functionally, inositol 5-phosphatase, which converts inositol 1,4,5-trisphosphate to inositol 1,4-bisphosphate. Also converts phosphatidylinositol 4,5-bisphosphate to phosphatidylinositol 4-phosphate and inositol 1,3,4,5-tetrakisphosphate to inositol 1,3,4-trisphosphate in vitro. May be involved in modulation of the function of inositol and phosphatidylinositol polyphosphate-binding proteins that are present at membranes ruffles. The sequence is that of Phosphatidylinositol 4,5-bisphosphate 5-phosphatase A (Inpp5j) from Rattus norvegicus (Rat).